The following is a 241-amino-acid chain: Pyridoxine 5'-phosphate synthase (241 aa).

A 3-amino-2-oxopropyl phosphate-binding site is contributed by Asn7. Residue 9–10 participates in 1-deoxy-D-xylulose 5-phosphate binding; that stretch reads DH. Arg18 contributes to the 3-amino-2-oxopropyl phosphate binding site. His43 functions as the Proton acceptor in the catalytic mechanism. Positions 45 and 50 each coordinate 1-deoxy-D-xylulose 5-phosphate. Catalysis depends on Glu70, which acts as the Proton acceptor. Thr100 contacts 1-deoxy-D-xylulose 5-phosphate. The active-site Proton donor is His190. 3-amino-2-oxopropyl phosphate contacts are provided by residues Gly191 and 212–213; that span reads GH.

This sequence belongs to the PNP synthase family. As to quaternary structure, homooctamer; tetramer of dimers.

Its subcellular location is the cytoplasm. The catalysed reaction is 3-amino-2-oxopropyl phosphate + 1-deoxy-D-xylulose 5-phosphate = pyridoxine 5'-phosphate + phosphate + 2 H2O + H(+). The protein operates within cofactor biosynthesis; pyridoxine 5'-phosphate biosynthesis; pyridoxine 5'-phosphate from D-erythrose 4-phosphate: step 5/5. Functionally, catalyzes the complicated ring closure reaction between the two acyclic compounds 1-deoxy-D-xylulose-5-phosphate (DXP) and 3-amino-2-oxopropyl phosphate (1-amino-acetone-3-phosphate or AAP) to form pyridoxine 5'-phosphate (PNP) and inorganic phosphate. The chain is Pyridoxine 5'-phosphate synthase from Bordetella avium (strain 197N).